A 228-amino-acid chain; its full sequence is Fibrillarin-like rRNA/tRNA 2'-O-methyltransferase (228 aa).

S-adenosyl-L-methionine contacts are provided by residues Thr-85–Thr-86, Glu-103–Phe-104, Asp-128–Ala-129, and Asp-148–Gln-151.

Belongs to the methyltransferase superfamily. Fibrillarin family. In terms of assembly, interacts with nop5. Component of box C/D small ribonucleoprotein (sRNP) particles that contain rpl7ae, FlpA and nop5, plus a guide RNA.

Functionally, involved in pre-rRNA and tRNA processing. Utilizes the methyl donor S-adenosyl-L-methionine to catalyze the site-specific 2'-hydroxyl methylation of ribose moieties in rRNA and tRNA. Site specificity is provided by a guide RNA that base pairs with the substrate. Methylation occurs at a characteristic distance from the sequence involved in base pairing with the guide RNA. This Methanococcus voltae protein is Fibrillarin-like rRNA/tRNA 2'-O-methyltransferase.